The chain runs to 138 residues: Small ribosomal subunit protein uS8 (138 aa).

It belongs to the universal ribosomal protein uS8 family. As to quaternary structure, part of the 30S ribosomal subunit. Contacts proteins S5 and S12.

Its function is as follows. One of the primary rRNA binding proteins, it binds directly to 16S rRNA central domain where it helps coordinate assembly of the platform of the 30S subunit. The chain is Small ribosomal subunit protein uS8 (rpsH) from Thermus thermophilus (strain ATCC BAA-163 / DSM 7039 / HB27).